We begin with the raw amino-acid sequence, 229 residues long: Protein-L-isoaspartate O-methyltransferase (229 aa).

Residue Ser-74 is part of the active site.

This sequence belongs to the methyltransferase superfamily. L-isoaspartyl/D-aspartyl protein methyltransferase family.

Its subcellular location is the cytoplasm. The enzyme catalyses [protein]-L-isoaspartate + S-adenosyl-L-methionine = [protein]-L-isoaspartate alpha-methyl ester + S-adenosyl-L-homocysteine. Catalyzes the methyl esterification of L-isoaspartyl residues in peptides and proteins that result from spontaneous decomposition of normal L-aspartyl and L-asparaginyl residues. It plays a role in the repair and/or degradation of damaged proteins. The chain is Protein-L-isoaspartate O-methyltransferase from Pelotomaculum thermopropionicum (strain DSM 13744 / JCM 10971 / SI).